A 405-amino-acid chain; its full sequence is Arrestin red cell isoform 2 (405 aa).

Belongs to the arrestin family.

It is found in the cytoplasm. This Oncorhynchus mykiss (Rainbow trout) protein is Arrestin red cell isoform 2.